The chain runs to 544 residues: Chaperonin GroEL (544 aa).

Residues 29–32 (TLGP), lysine 50, 86–90 (DGTTT), glycine 415, and aspartate 495 contribute to the ATP site.

The protein belongs to the chaperonin (HSP60) family. Forms a cylinder of 14 subunits composed of two heptameric rings stacked back-to-back. Interacts with the co-chaperonin GroES.

It localises to the cytoplasm. The enzyme catalyses ATP + H2O + a folded polypeptide = ADP + phosphate + an unfolded polypeptide.. Functionally, together with its co-chaperonin GroES, plays an essential role in assisting protein folding. The GroEL-GroES system forms a nano-cage that allows encapsulation of the non-native substrate proteins and provides a physical environment optimized to promote and accelerate protein folding. This Tannerella forsythia (Bacteroides forsythus) protein is Chaperonin GroEL.